Here is a 131-residue protein sequence, read N- to C-terminus: ER membrane protein complex subunit 5 (131 aa).

The Cytoplasmic portion of the chain corresponds to 1 to 3 (MAP). A helical membrane pass occupies residues 4-22 (SLWKGLVGVGLFALAHAAF). Residues 23–43 (SAAQHRSYMRLTEKEDESLPI) lie on the Lumenal side of the membrane. Residues 44 to 63 (DIVLQTLLAFAVTCYGIVHI) traverse the membrane as a helical segment. Residues 64 to 131 (AGEFKDMDAT…KLRKFDSLRR (68 aa)) lie on the Cytoplasmic side of the membrane. Ser120 carries the post-translational modification Phosphoserine.

Belongs to the membrane magnesium transporter (TC 1.A.67) family. Component of the ER membrane protein complex (EMC). As to expression, abundant in heart muscle and kidney with lower levels in liver and brain and very little expression in intestine or colon. In kidney, highest levels in distal convoluted tubule.

The protein resides in the endoplasmic reticulum membrane. It localises to the golgi apparatus membrane. It is found in the early endosome membrane. Functionally, part of the endoplasmic reticulum membrane protein complex (EMC) that enables the energy-independent insertion into endoplasmic reticulum membranes of newly synthesized membrane proteins. Preferentially accommodates proteins with transmembrane domains that are weakly hydrophobic or contain destabilizing features such as charged and aromatic residues. Involved in the cotranslational insertion of multi-pass membrane proteins in which stop-transfer membrane-anchor sequences become ER membrane spanning helices. It is also required for the post-translational insertion of tail-anchored/TA proteins in endoplasmic reticulum membranes. By mediating the proper cotranslational insertion of N-terminal transmembrane domains in an N-exo topology, with translocated N-terminus in the lumen of the ER, controls the topology of multi-pass membrane proteins like the G protein-coupled receptors. By regulating the insertion of various proteins in membranes, it is indirectly involved in many cellular processes. May be involved Mg(2+) transport. The sequence is that of ER membrane protein complex subunit 5 from Mus musculus (Mouse).